A 123-amino-acid polypeptide reads, in one-letter code: MAATAEVIPAGEVIACHTVEDWNNKLKAAKESNKLIVIDFTAVWCPPCRFIAPIFVELAKKHLDVVFFKVDVDELATVAQEFDVQAMPTFVYMKGEEKLDKVVGAAKEEIEAKLLKHSQVAAA.

A2 bears the N-acetylalanine mark. The region spanning 2–119 (AATAEVIPAG…IEAKLLKHSQ (118 aa)) is the Thioredoxin domain. Residues C45 and C48 are joined by a disulfide bond.

Belongs to the thioredoxin family. Plant H-type subfamily.

It is found in the cytoplasm. Its function is as follows. Participates in various redox reactions through the reversible oxidation of the active center dithiol to a disulfide. The H form is known to activate a number of cytosolic enzymes. This Brassica napus (Rape) protein is Thioredoxin H-type 1 (THL-1).